Here is a 141-residue protein sequence, read N- to C-terminus: Large ribosomal subunit protein uL11 (141 aa).

Belongs to the universal ribosomal protein uL11 family. In terms of assembly, part of the ribosomal stalk of the 50S ribosomal subunit. Interacts with L10 and the large rRNA to form the base of the stalk. L10 forms an elongated spine to which L12 dimers bind in a sequential fashion forming a multimeric L10(L12)X complex. Post-translationally, one or more lysine residues are methylated.

Functionally, forms part of the ribosomal stalk which helps the ribosome interact with GTP-bound translation factors. This chain is Large ribosomal subunit protein uL11, found in Shouchella clausii (strain KSM-K16) (Alkalihalobacillus clausii).